The chain runs to 351 residues: F-box protein At1g70590 (351 aa).

A disordered region spans residues Met1–Asn60. Positions Ile32–Lys41 are enriched in polar residues. The span at Ser42 to Ser59 shows a compositional bias: low complexity. An F-box domain is found at Phe62 to Trp111. A Sel1-like repeat occupies Ser105–Ser141. A TPR repeat occupies Thr142–Val175.

The sequence is that of F-box protein At1g70590 from Arabidopsis thaliana (Mouse-ear cress).